The following is a 409-amino-acid chain: Triose phosphate/phosphate translocator, chloroplastic (409 aa).

The transit peptide at 1 to 85 (MSALGTLSGG…ARRHTLQPPA (85 aa)) directs the protein to the chloroplast. The Chloroplast intermembrane portion of the chain corresponds to 86–104 (AAAESAGEAKSVGFLEKYP). A helical membrane pass occupies residues 105-125 (ALVTGFFFFMWYFLNVIFNIL). The Lumenal segment spans residues 126 to 137 (NKKIYNYFPYPY). Residues 138 to 158 (FVSLIHLVVGVVYCLISWSVG) form a helical membrane-spanning segment. Residues 159-215 (LPKRAPINGTLLKLLFPVALCHGIGHITSNVSFAAVAVSFAHTIKALEPFFSAAATQ) are Chloroplast intermembrane-facing. The helical transmembrane segment at 216–236 (FILGQQVPFSLWLSLAPVVIG) threads the bilayer. The Lumenal segment spans residues 237–280 (VSMASLTELSFNWTGFINAMISNISFTYRSIYSKKAMTDMDSTN). A helical membrane pass occupies residues 281 to 300 (VYAYISIIALIVCIPPALIF). Residues 301 to 378 (EGPKLMQHGF…IVFGNKISTQ (78 aa)) are Chloroplast intermembrane-facing. The helical transmembrane segment at 379–399 (TGIGTSIAIAGVAMYSYIKAK) threads the bilayer. Over 400–409 (IEEEKRKKSA) the chain is Lumenal.

It belongs to the TPT transporter family. TPT (TC 2.A.7.9) subfamily. Homodimer.

Its subcellular location is the plastid. It localises to the chloroplast membrane. In terms of biological role, mediates the export of fixed carbons from the chloroplasts into the cytosol in the form of triose phosphates. In addition, it can also bind and transport phosphoenolpyruvate, thereby increasing the photosynthetic efficiency of C4-plants. The chain is Triose phosphate/phosphate translocator, chloroplastic (TPT) from Zea mays (Maize).